Consider the following 140-residue polypeptide: Organic hydroperoxide resistance protein-like (140 aa).

This sequence belongs to the OsmC/Ohr family.

This is Organic hydroperoxide resistance protein-like from Mycoplasma pneumoniae (strain ATCC 29342 / M129 / Subtype 1) (Mycoplasmoides pneumoniae).